The chain runs to 272 residues: RELT-like protein 1 (272 aa).

The N-terminal stretch at 1–23 (MALWGLPGSAVLAASVFVGGAVS) is a signal peptide. Topologically, residues 24-58 (SPLVAADNTGSHTLHSRAETTPSSPTNNPGNGHPE) are extracellular. Positions 33 to 52 (GSHTLHSRAETTPSSPTNNP) are disordered. A helical membrane pass occupies residues 59-79 (YIAYVLVPVFFVMGLLGVLIC). The Cytoplasmic segment spans residues 80-272 (HLLKKKGYRC…PVKRERSDTE (193 aa)). A coiled-coil region spans residues 90 to 114 (TTEAEQEVEEEKVEKIELNDSINEN). Ser-110 and Ser-115 each carry phosphoserine. Disordered stretches follow at residues 146 to 171 (DIES…PGAT) and 235 to 272 (EHKS…SDTE). Residues 156–166 (PGSPPVSPGPL) show a composition bias toward pro residues. The span at 235 to 245 (EHKSNQKERRS) shows a compositional bias: basic and acidic residues. Residues Ser-245 and Ser-248 each carry the phosphoserine modification.

It belongs to the RELT family. In terms of assembly, interacts with RELT, RELL2, OXSR1 and PLSCR1.

The protein localises to the cell membrane. Induces activation of MAPK14/p38 cascade, when overexpressed. Induces apoptosis, when overexpressed. The protein is RELT-like protein 1 (Rell1) of Mus musculus (Mouse).